The primary structure comprises 538 residues: Syncytin-1 (538 aa).

The first 20 residues, 1-20, serve as a signal peptide directing secretion; it reads MALPYHIFLFTVLLPSFTLT. Residues 21-443 lie on the Extracellular side of the membrane; it reads APPPCRCMTS…NTGPWGLLSQ (423 aa). N169 carries an N-linked (GlcNAc...) asparagine glycan. The CXXC signature appears at 186 to 189; that stretch reads CWIC. 3 disulfides stabilise this stretch: C186–C189, C186–C405, and C397–C404. Residues N208, N214, N234, N242, and N281 are each glycosylated (N-linked (GlcNAc...) asparagine). The fusion peptide stretch occupies residues 320 to 340; that stretch reads ILPFVIGAGVLGALGTGIGGI. The interval 380-396 is immunosuppression; the sequence is LQNRRALDLLTAERGGT. The CX6CC signature appears at 397–406; sequence CLFLGEECCY. N409 is a glycosylation site (N-linked (GlcNAc...) asparagine). Residues 444 to 464 form a helical membrane-spanning segment; that stretch reads WMPWILPFLGPLAAIILLLLF. The segment at 465–484 is essential for the fusiogenic function; the sequence is GPCIFNLLVNFVSSRIEAVK. Topologically, residues 465–538 are cytoplasmic; that stretch reads GPCIFNLLVN…LLRPNSAGSS (74 aa). Positions 496–538 are disordered; that stretch reads KIYRRPLDRPASPRSDVNDIKGTPPEEISAAQPLLRPNSAGSS.

It belongs to the gamma type-C retroviral envelope protein family. HERV class-I W env subfamily. The mature envelope protein (Env) consists of a trimer of SU-TM heterodimers attached probably by a labile interchain disulfide bond. Interacts with the C-type lectin CD209/DC-SIGN. Specific enzymatic cleavages in vivo yield mature proteins. Envelope glycoproteins are synthesized as an inactive precursor that is heavily N-glycosylated and processed likely by furin in the Golgi to yield the mature SU and TM proteins. The cleavage site between SU and TM requires the minimal sequence [KR]-X-[KR]-R. The intracytoplasmic tail cleavage by the viral protease that is required for the fusiogenic activity of some retroviruses envelope proteins seems to have been lost during evolution. Post-translationally, the CXXC motif is highly conserved across a broad range of retroviral envelope proteins. It is thought to participate in the formation of a labile disulfide bond possibly with the CX6CC motif present in the transmembrane protein. Isomerization of the intersubunit disulfide bond to an SU intrachain disulfide bond is thought to occur upon receptor recognition in order to allow membrane fusion. Expressed at higher level in placental syncytiotrophoblast. Expressed at intermediate level in testis. Seems also to be found at low level in adrenal tissue, bone marrow, breast, colon, kidney, ovary, prostate, skin, spleen, thymus, thyroid, brain and trachea. Both mRNA and protein levels are significantly increased in the brain of individuals with multiple sclerosis, particularly in astrocytes and microglia.

The protein resides in the cell membrane. The protein localises to the virion. This endogenous retroviral envelope protein has retained its original fusogenic properties and participates in trophoblast fusion and the formation of a syncytium during placenta morphogenesis. May induce fusion through binding of SLC1A4 and SLC1A5. In terms of biological role, endogenous envelope proteins may have kept, lost or modified their original function during evolution. Retroviral envelope proteins mediate receptor recognition and membrane fusion during early infection. The surface protein (SU) mediates receptor recognition, while the transmembrane protein (TM) acts as a class I viral fusion protein. The protein may have at least 3 conformational states: pre-fusion native state, pre-hairpin intermediate state, and post-fusion hairpin state. During viral and target cell membrane fusion, the coiled coil regions (heptad repeats) assume a trimer-of-hairpins structure, positioning the fusion peptide in close proximity to the C-terminal region of the ectodomain. The formation of this structure appears to drive apposition and subsequent fusion of membranes. This Homo sapiens (Human) protein is Syncytin-1 (ERVW-1).